Reading from the N-terminus, the 422-residue chain is Tyrosine--tRNA ligase (422 aa).

Tyr-35 contributes to the L-tyrosine binding site. A 'HIGH' region motif is present at residues 40-49 (PTAPSLHVGH). Residues Tyr-170 and Gln-174 each contribute to the L-tyrosine site. Positions 231–235 (KFGKT) match the 'KMSKS' region motif. Lys-234 is a binding site for ATP. Residues 353–419 (APVVDLFAEV…GKKNLAAVEI (67 aa)) enclose the S4 RNA-binding domain.

Belongs to the class-I aminoacyl-tRNA synthetase family. TyrS type 1 subfamily. As to quaternary structure, homodimer.

The protein localises to the cytoplasm. The enzyme catalyses tRNA(Tyr) + L-tyrosine + ATP = L-tyrosyl-tRNA(Tyr) + AMP + diphosphate + H(+). Catalyzes the attachment of tyrosine to tRNA(Tyr) in a two-step reaction: tyrosine is first activated by ATP to form Tyr-AMP and then transferred to the acceptor end of tRNA(Tyr). In Streptomyces coelicolor (strain ATCC BAA-471 / A3(2) / M145), this protein is Tyrosine--tRNA ligase.